The chain runs to 763 residues: Phosphoglycerol transferase I (763 aa).

The next 4 helical transmembrane spans lie at 1–21 (MSELLSFALFLASVLIYAWKA), 26–46 (WWFAATLTVLGLFVVLNITLF), 77–97 (ILPGIGIVLGLTAVFGALGWI), and 108–128 (FGYSLLALLLALGSVDASPAF).

The protein belongs to the OpgB family.

Its subcellular location is the cell inner membrane. It catalyses the reaction a phosphatidylglycerol + a membrane-derived-oligosaccharide D-glucose = a 1,2-diacyl-sn-glycerol + a membrane-derived-oligosaccharide 6-(glycerophospho)-D-glucose.. The protein operates within glycan metabolism; osmoregulated periplasmic glucan (OPG) biosynthesis. In terms of biological role, transfers a phosphoglycerol residue from phosphatidylglycerol to the membrane-bound nascent glucan backbones. The protein is Phosphoglycerol transferase I of Escherichia coli (strain 55989 / EAEC).